Reading from the N-terminus, the 202-residue chain is Superoxide dismutase [Fe] (202 aa).

Residues His27, His82, Asp164, and His168 each contribute to the Fe cation site.

Belongs to the iron/manganese superoxide dismutase family. As to quaternary structure, homodimer. It depends on Fe cation as a cofactor.

The catalysed reaction is 2 superoxide + 2 H(+) = H2O2 + O2. Functionally, destroys superoxide anion radicals which are normally produced within the cells and which are toxic to biological systems. The polypeptide is Superoxide dismutase [Fe] (sodA) (Enterococcus faecalis (strain ATCC 700802 / V583)).